The primary structure comprises 371 residues: Gamma-tocopherol methyltransferase, chloroplastic (371 aa).

The N-terminal 65 residues, 1–65, are a transit peptide targeting the chloroplast; it reads MAAAPVFFPS…NSNRIASRLQ (65 aa). The interval 153-162 is SAM motif I; sequence IVDVGCGIGG. Residues 216-224 form an SAM motif II region; the sequence is GQFDLVWSM. The SAM motif III stretch occupies residues 243–252; that stretch reads VAAPGATIII.

Belongs to the class I-like SAM-binding methyltransferase superfamily. gTMT family. In terms of assembly, homodimer.

It localises to the plastid. Its subcellular location is the chloroplast inner membrane. The enzyme catalyses picrinine + S-adenosyl-L-methionine = ervincine + S-adenosyl-L-homocysteine + H(+). The protein operates within alkaloid biosynthesis; vindoline biosynthesis. Functionally, S-adenosyl-L-methionine-dependent N-methyltransferase involved in the biosynthesis of biologically active monoterpenoid indole alkaloids (MIAs) natural products including vindoline. Inactive with picrinine as substrate. The polypeptide is Gamma-tocopherol methyltransferase, chloroplastic (Catharanthus roseus (Madagascar periwinkle)).